The chain runs to 442 residues: D-serine dehydratase 1 (442 aa).

Residue Lys118 is modified to N6-(pyridoxal phosphate)lysine.

The protein belongs to the serine/threonine dehydratase family. DsdA subfamily. Monomer. Pyridoxal 5'-phosphate is required as a cofactor.

The enzyme catalyses D-serine = pyruvate + NH4(+). The chain is D-serine dehydratase 1 from Escherichia coli O6:K15:H31 (strain 536 / UPEC).